A 155-amino-acid polypeptide reads, in one-letter code: 3-hydroxyacyl-[acyl-carrier-protein] dehydratase FabZ (155 aa).

The active site involves His-54.

It belongs to the thioester dehydratase family. FabZ subfamily.

Its subcellular location is the cytoplasm. It carries out the reaction a (3R)-hydroxyacyl-[ACP] = a (2E)-enoyl-[ACP] + H2O. Involved in unsaturated fatty acids biosynthesis. Catalyzes the dehydration of short chain beta-hydroxyacyl-ACPs and long chain saturated and unsaturated beta-hydroxyacyl-ACPs. This is 3-hydroxyacyl-[acyl-carrier-protein] dehydratase FabZ from Burkholderia ambifaria (strain MC40-6).